Consider the following 230-residue polypeptide: MIEAILFDVDGTLAETEELHRRAFNETFAALGVDWFWDREEYRELLTTTGGKERIARFLRHQKGDPAPLPIADIHRAKTERFVALMAEGEIALRPGIADLIAEAKRAGIRLAVATTTSLPNVEALCRACFGHPAREIFDVIAAGDMVAEKKPSPDIYRLALRELDVPPERAVALEDSLNGLRAAKGAGLRCIVSPGFYTRHEEFAGADRLLDSFAELGGLAGLDLTAPVA.

Aspartate 8 serves as the catalytic Nucleophile. Residues aspartate 8 and aspartate 10 each coordinate Mg(2+). Substrate is bound at residue aspartate 8. The active-site Proton donor is aspartate 10. Residues glutamate 17, 50-54 (GGKER), 75-78 (HRAK), and 115-121 (TTTSLPN) contribute to the substrate site. Aspartate 176 is a binding site for Mg(2+).

The protein belongs to the HAD-like hydrolase superfamily. CbbY/CbbZ/Gph/YieH family. Requires Mg(2+) as cofactor.

It catalyses the reaction D-xylulose 1,5-bisphosphate + H2O = D-xylulose 5-phosphate + phosphate. Its function is as follows. Highly selective xylulose-1,5-bisphosphate (XuBP) phosphatase. Also shows activity towards ribulose-1,5-bisphosphate (RuBP) and fructose-1,6-bisphosphate (FBP), but not towards fructose-6-phosphate (F6P) or ribulose-5-phosphate (Ru5P). Degrades xylulose-1,5-bisphosphate, a potent inhibitor of rubisco produced by the rubisco itself. The sequence is that of Protein CbbY from Cereibacter sphaeroides (Rhodobacter sphaeroides).